Consider the following 304-residue polypeptide: Coenzyme PQQ synthesis protein B (304 aa).

The protein belongs to the PqqB family.

It participates in cofactor biosynthesis; pyrroloquinoline quinone biosynthesis. In terms of biological role, may be involved in the transport of PQQ or its precursor to the periplasm. The protein is Coenzyme PQQ synthesis protein B of Stutzerimonas stutzeri (Pseudomonas stutzeri).